Reading from the N-terminus, the 520-residue chain is Cytochrome P450 84A1 (520 aa).

M1 is modified (N-acetylmethionine). A helical transmembrane segment spans residues 12–32 (LSDPTTSLVIVVSLFIFISFI). C458 is a heme binding site.

It belongs to the cytochrome P450 family. Heme is required as a cofactor.

It is found in the membrane. Its pathway is aromatic compound metabolism; phenylpropanoid biosynthesis. The polypeptide is Cytochrome P450 84A1 (CYP84A1) (Arabidopsis thaliana (Mouse-ear cress)).